The chain runs to 186 residues: Phosphoheptose isomerase 1 (186 aa).

Positions 33–186 (LCECLKKGGK…TLCQIIDESF (154 aa)) constitute an SIS domain. Residue 48 to 50 (NGG) coordinates substrate. Residues histidine 57 and glutamate 61 each contribute to the Zn(2+) site. Substrate-binding positions include glutamate 61, 90-91 (ND), 116-118 (STS), serine 121, and glutamine 168. Zn(2+) contacts are provided by glutamine 168 and histidine 176.

The protein belongs to the SIS family. GmhA subfamily. In terms of assembly, homotetramer. Zn(2+) is required as a cofactor.

The protein localises to the cytoplasm. The catalysed reaction is 2 D-sedoheptulose 7-phosphate = D-glycero-alpha-D-manno-heptose 7-phosphate + D-glycero-beta-D-manno-heptose 7-phosphate. The protein operates within carbohydrate biosynthesis; D-glycero-D-manno-heptose 7-phosphate biosynthesis; D-glycero-alpha-D-manno-heptose 7-phosphate and D-glycero-beta-D-manno-heptose 7-phosphate from sedoheptulose 7-phosphate: step 1/1. It functions in the pathway bacterial outer membrane biogenesis; LOS core biosynthesis. In terms of biological role, catalyzes the isomerization of sedoheptulose 7-phosphate in D-glycero-D-manno-heptose 7-phosphate. The protein is Phosphoheptose isomerase 1 (gmhA1) of Campylobacter jejuni subsp. jejuni serotype O:2 (strain ATCC 700819 / NCTC 11168).